The sequence spans 181 residues: MSLTKSLLFTLLLSAAAVQASTRDEIERLWNPQGMATQPAQPAAGTSARTAKPAPRWFRLSNGRQVNLADWKVVLFMQGHCPYCHQFDPVLKQLAQQYGFSVFSYTLDGQGDTAFPEALPVPPDVMQTFFPNIPVATPTTFLVNVNTLEALPLLQGATDAAGFMARVDTVLQMYGGKKGAK.

A signal peptide spans 1–22; sequence MSLTKSLLFTLLLSAAAVQAST. Residues 37–172 form the Thioredoxin domain; sequence TQPAQPAAGT…FMARVDTVLQ (136 aa).

Its subcellular location is the periplasm. This is Protein TrbB (trbB) from Escherichia coli (strain K12).